The following is a 97-amino-acid chain: U-scoloptoxin(10)-Sa2a (97 aa).

Positions 1–23 (MNKSMLIFFTILFLTYIIEEKEA) are cleaved as a signal peptide.

Belongs to the scoloptoxin-10 family. Contains 3 disulfide bonds. In terms of tissue distribution, expressed by the venom gland.

The protein resides in the secreted. This Scolopendra alternans (Florida Keys giant centipede) protein is U-scoloptoxin(10)-Sa2a.